The following is a 224-amino-acid chain: Urease accessory protein UreF (224 aa).

Belongs to the UreF family. UreD, UreF and UreG form a complex that acts as a GTP-hydrolysis-dependent molecular chaperone, activating the urease apoprotein by helping to assemble the nickel containing metallocenter of UreC. The UreE protein probably delivers the nickel.

It localises to the cytoplasm. Required for maturation of urease via the functional incorporation of the urease nickel metallocenter. The chain is Urease accessory protein UreF from Pseudomonas putida (strain W619).